Consider the following 89-residue polypeptide: Neuropeptide S (89 aa).

The signal sequence occupies residues 1-23 (MIGSLKFNFILFLLISTMHMFWC). Residues 24–67 (HPISSSKVPGKSDYFVILLNSCPTRMDRRVGLDFLKPILEKTLM) constitute a propeptide that is removed on maturation.

It localises to the secreted. Its function is as follows. Modulates arousal and anxiety. May play an important anorexigenic role. Binds to its receptor NPSR1 with nanomolar affinity to increase intracellular calcium concentrations. This is Neuropeptide S (NPS) from Bos taurus (Bovine).